Reading from the N-terminus, the 199-residue chain is NADH-quinone oxidoreductase subunit C (199 aa).

The protein belongs to the complex I 30 kDa subunit family. NDH-1 is composed of 14 different subunits. Subunits NuoB, C, D, E, F, and G constitute the peripheral sector of the complex.

It is found in the cell inner membrane. The catalysed reaction is a quinone + NADH + 5 H(+)(in) = a quinol + NAD(+) + 4 H(+)(out). Functionally, NDH-1 shuttles electrons from NADH, via FMN and iron-sulfur (Fe-S) centers, to quinones in the respiratory chain. The immediate electron acceptor for the enzyme in this species is believed to be ubiquinone. Couples the redox reaction to proton translocation (for every two electrons transferred, four hydrogen ions are translocated across the cytoplasmic membrane), and thus conserves the redox energy in a proton gradient. This chain is NADH-quinone oxidoreductase subunit C, found in Cupriavidus pinatubonensis (strain JMP 134 / LMG 1197) (Cupriavidus necator (strain JMP 134)).